A 591-amino-acid chain; its full sequence is Aspartate--tRNA(Asp/Asn) ligase (591 aa).

Glutamate 175 contacts L-aspartate. The segment at 199 to 202 (QQFK) is aspartate. 2 residues coordinate L-aspartate: arginine 221 and histidine 453. 221–223 (RDE) is a binding site for ATP. Glutamate 486 is a binding site for ATP. Arginine 493 provides a ligand contact to L-aspartate. 538–541 (GIDR) contributes to the ATP binding site.

Belongs to the class-II aminoacyl-tRNA synthetase family. Type 1 subfamily. As to quaternary structure, homodimer.

The protein localises to the cytoplasm. The catalysed reaction is tRNA(Asx) + L-aspartate + ATP = L-aspartyl-tRNA(Asx) + AMP + diphosphate. Its function is as follows. Aspartyl-tRNA synthetase with relaxed tRNA specificity since it is able to aspartylate not only its cognate tRNA(Asp) but also tRNA(Asn). Reaction proceeds in two steps: L-aspartate is first activated by ATP to form Asp-AMP and then transferred to the acceptor end of tRNA(Asp/Asn). This is Aspartate--tRNA(Asp/Asn) ligase from Paracoccus denitrificans (strain Pd 1222).